The sequence spans 426 residues: Serine--tRNA ligase (426 aa).

233–235 (TAE) provides a ligand contact to L-serine. 264–266 (RSE) lines the ATP pocket. Glu-287 contributes to the L-serine binding site. 351–354 (EISS) contributes to the ATP binding site. Ser-387 is an L-serine binding site.

This sequence belongs to the class-II aminoacyl-tRNA synthetase family. Type-1 seryl-tRNA synthetase subfamily. As to quaternary structure, homodimer. The tRNA molecule binds across the dimer.

It is found in the cytoplasm. It carries out the reaction tRNA(Ser) + L-serine + ATP = L-seryl-tRNA(Ser) + AMP + diphosphate + H(+). The catalysed reaction is tRNA(Sec) + L-serine + ATP = L-seryl-tRNA(Sec) + AMP + diphosphate + H(+). The protein operates within aminoacyl-tRNA biosynthesis; selenocysteinyl-tRNA(Sec) biosynthesis; L-seryl-tRNA(Sec) from L-serine and tRNA(Sec): step 1/1. In terms of biological role, catalyzes the attachment of serine to tRNA(Ser). Is also able to aminoacylate tRNA(Sec) with serine, to form the misacylated tRNA L-seryl-tRNA(Sec), which will be further converted into selenocysteinyl-tRNA(Sec). The polypeptide is Serine--tRNA ligase (Clostridium botulinum (strain Kyoto / Type A2)).